We begin with the raw amino-acid sequence, 466 residues long: Signal recognition particle 54 kDa protein (466 aa).

Residues 104–111 (GLQGSGKT), 184–188 (DTAGR), and 242–245 (TKLD) each bind GTP. Residues 444 to 466 (MQQGGGGGGGGGGGLGGMGPFGD) form a disordered region. The span at 446 to 466 (QGGGGGGGGGGGLGGMGPFGD) shows a compositional bias: gly residues.

The protein belongs to the GTP-binding SRP family. SRP54 subfamily. In terms of assembly, part of the signal recognition particle protein translocation system, which is composed of SRP and FtsY. Archaeal SRP consists of a 7S RNA molecule of 300 nucleotides and two protein subunits: SRP54 and SRP19.

The protein localises to the cytoplasm. The enzyme catalyses GTP + H2O = GDP + phosphate + H(+). Its function is as follows. Involved in targeting and insertion of nascent membrane proteins into the cytoplasmic membrane. Binds to the hydrophobic signal sequence of the ribosome-nascent chain (RNC) as it emerges from the ribosomes. The SRP-RNC complex is then targeted to the cytoplasmic membrane where it interacts with the SRP receptor FtsY. The protein is Signal recognition particle 54 kDa protein of Natronomonas pharaonis (strain ATCC 35678 / DSM 2160 / CIP 103997 / JCM 8858 / NBRC 14720 / NCIMB 2260 / Gabara) (Halobacterium pharaonis).